Here is a 55-residue protein sequence, read N- to C-terminus: U17-myrmicitoxin-Mri1b (55 aa).

Residues 1 to 31 (MENSRTSTFTAYVTVAFLLISTFVTMVVTES) form the signal peptide. A Pyrrolidone carboxylic acid modification is found at Gln-32.

Post-translationally, contains 1 disulfide bond. Expressed by the venom gland.

It localises to the secreted. The protein is U17-myrmicitoxin-Mri1b of Manica rubida (European giant red ant).